The chain runs to 199 residues: Cytochrome c oxidase subunit 2 (199 aa).

A helical transmembrane segment spans residues alanine 1 to methionine 13. Residues leucine 14 to glutamine 26 lie on the Mitochondrial matrix side of the membrane. The helical transmembrane segment at glutamate 27–methionine 54 threads the bilayer. Residues aspartate 55 to leucine 199 lie on the Mitochondrial intermembrane side of the membrane. The Cu cation site is built by histidine 128, cysteine 163, glutamate 165, cysteine 167, histidine 171, and methionine 174. Glutamate 165 contacts Mg(2+).

The protein belongs to the cytochrome c oxidase subunit 2 family. In terms of assembly, component of the cytochrome c oxidase (complex IV, CIV), a multisubunit enzyme composed of 14 subunits. The complex is composed of a catalytic core of 3 subunits MT-CO1, MT-CO2 and MT-CO3, encoded in the mitochondrial DNA, and 11 supernumerary subunits COX4I, COX5A, COX5B, COX6A, COX6B, COX6C, COX7A, COX7B, COX7C, COX8 and NDUFA4, which are encoded in the nuclear genome. The complex exists as a monomer or a dimer and forms supercomplexes (SCs) in the inner mitochondrial membrane with NADH-ubiquinone oxidoreductase (complex I, CI) and ubiquinol-cytochrome c oxidoreductase (cytochrome b-c1 complex, complex III, CIII), resulting in different assemblies (supercomplex SCI(1)III(2)IV(1) and megacomplex MCI(2)III(2)IV(2)). Found in a complex with TMEM177, COA6, COX18, COX20, SCO1 and SCO2. Interacts with TMEM177 in a COX20-dependent manner. Interacts with COX20. Interacts with COX16. Requires Cu cation as cofactor.

Its subcellular location is the mitochondrion inner membrane. It carries out the reaction 4 Fe(II)-[cytochrome c] + O2 + 8 H(+)(in) = 4 Fe(III)-[cytochrome c] + 2 H2O + 4 H(+)(out). In terms of biological role, component of the cytochrome c oxidase, the last enzyme in the mitochondrial electron transport chain which drives oxidative phosphorylation. The respiratory chain contains 3 multisubunit complexes succinate dehydrogenase (complex II, CII), ubiquinol-cytochrome c oxidoreductase (cytochrome b-c1 complex, complex III, CIII) and cytochrome c oxidase (complex IV, CIV), that cooperate to transfer electrons derived from NADH and succinate to molecular oxygen, creating an electrochemical gradient over the inner membrane that drives transmembrane transport and the ATP synthase. Cytochrome c oxidase is the component of the respiratory chain that catalyzes the reduction of oxygen to water. Electrons originating from reduced cytochrome c in the intermembrane space (IMS) are transferred via the dinuclear copper A center (CU(A)) of subunit 2 and heme A of subunit 1 to the active site in subunit 1, a binuclear center (BNC) formed by heme A3 and copper B (CU(B)). The BNC reduces molecular oxygen to 2 water molecules using 4 electrons from cytochrome c in the IMS and 4 protons from the mitochondrial matrix. This is Cytochrome c oxidase subunit 2 (MT-CO2) from Apteryx australis (Southern brown kiwi).